A 493-amino-acid polypeptide reads, in one-letter code: Probable glycine dehydrogenase (decarboxylating) subunit 2 (493 aa).

An N6-(pyridoxal phosphate)lysine modification is found at K269.

It belongs to the GcvP family. C-terminal subunit subfamily. As to quaternary structure, the glycine cleavage system is composed of four proteins: P, T, L and H. In this organism, the P 'protein' is a heterodimer of two subunits. It depends on pyridoxal 5'-phosphate as a cofactor.

It carries out the reaction N(6)-[(R)-lipoyl]-L-lysyl-[glycine-cleavage complex H protein] + glycine + H(+) = N(6)-[(R)-S(8)-aminomethyldihydrolipoyl]-L-lysyl-[glycine-cleavage complex H protein] + CO2. Functionally, the glycine cleavage system catalyzes the degradation of glycine. The P protein binds the alpha-amino group of glycine through its pyridoxal phosphate cofactor; CO(2) is released and the remaining methylamine moiety is then transferred to the lipoamide cofactor of the H protein. The polypeptide is Probable glycine dehydrogenase (decarboxylating) subunit 2 (Chloroherpeton thalassium (strain ATCC 35110 / GB-78)).